The sequence spans 459 residues: Putrescine aminotransferase (459 aa).

Residues 150 to 151 (GT) and glutamine 274 each bind pyridoxal 5'-phosphate. Lysine 300 is modified (N6-(pyridoxal phosphate)lysine). A pyridoxal 5'-phosphate-binding site is contributed by threonine 332.

Belongs to the class-III pyridoxal-phosphate-dependent aminotransferase family. Putrescine aminotransferase subfamily. The cofactor is pyridoxal 5'-phosphate.

The catalysed reaction is an alkane-alpha,omega-diamine + 2-oxoglutarate = an omega-aminoaldehyde + L-glutamate. It catalyses the reaction putrescine + 2-oxoglutarate = 1-pyrroline + L-glutamate + H2O. The enzyme catalyses cadaverine + 2-oxoglutarate = 5-aminopentanal + L-glutamate. Its pathway is amine and polyamine degradation; putrescine degradation; 4-aminobutanal from putrescine (transaminase route): step 1/1. In terms of biological role, catalyzes the aminotransferase reaction from putrescine to 2-oxoglutarate, leading to glutamate and 4-aminobutanal, which spontaneously cyclizes to form 1-pyrroline. This is the first step in one of two pathways for putrescine degradation, where putrescine is converted into 4-aminobutanoate (gamma-aminobutyrate or GABA) via 4-aminobutanal. Also functions as a cadaverine transaminase in a a L-lysine degradation pathway to succinate that proceeds via cadaverine, glutarate and L-2-hydroxyglutarate. The sequence is that of Putrescine aminotransferase from Escherichia coli O81 (strain ED1a).